The sequence spans 125 residues: Large ribosomal subunit protein bL12 (125 aa).

The protein belongs to the bacterial ribosomal protein bL12 family. Homodimer. Part of the ribosomal stalk of the 50S ribosomal subunit. Forms a multimeric L10(L12)X complex, where L10 forms an elongated spine to which 2 to 4 L12 dimers bind in a sequential fashion. Binds GTP-bound translation factors.

Forms part of the ribosomal stalk which helps the ribosome interact with GTP-bound translation factors. Is thus essential for accurate translation. The chain is Large ribosomal subunit protein bL12 from Ruegeria sp. (strain TM1040) (Silicibacter sp.).